A 549-amino-acid chain; its full sequence is Oxygen-dependent choline dehydrogenase (549 aa).

An FAD-binding site is contributed by 4–33 (DYIIIGSGSAGSALAHRLSEDSRNSVIVLE). The active-site Proton acceptor is the His-465.

It belongs to the GMC oxidoreductase family. FAD is required as a cofactor.

It carries out the reaction choline + A = betaine aldehyde + AH2. The catalysed reaction is betaine aldehyde + NAD(+) + H2O = glycine betaine + NADH + 2 H(+). It participates in amine and polyamine biosynthesis; betaine biosynthesis via choline pathway; betaine aldehyde from choline (cytochrome c reductase route): step 1/1. In terms of biological role, involved in the biosynthesis of the osmoprotectant glycine betaine. Catalyzes the oxidation of choline to betaine aldehyde and betaine aldehyde to glycine betaine at the same rate. This is Oxygen-dependent choline dehydrogenase from Sinorhizobium fredii (strain NBRC 101917 / NGR234).